An 80-amino-acid chain; its full sequence is U1-nemetoxin-Csp1a (80 aa).

Residues 1-20 (MKYFVVFCVLIIAVAAFTSA) form the signal peptide. Positions 21–41 (AEDGEVFEENPLEFPKTIQKR) are excised as a propeptide. Cystine bridges form between cysteine 42–cysteine 56, cysteine 49–cysteine 60, cysteine 55–cysteine 77, and cysteine 66–cysteine 73.

It belongs to the neurotoxin 13 (insecticidal toxin ABC) family. 02 (Calisoga) subfamily. In terms of tissue distribution, expressed by the venom gland.

It localises to the secreted. Its function is as follows. Causes paralysis to insect larvae (H.virescens). This toxin is active only on insects. This is U1-nemetoxin-Csp1a from Calisoga sp. (Spider).